We begin with the raw amino-acid sequence, 251 residues long: 4-hydroxy-tetrahydrodipicolinate reductase (251 aa).

Residues 9–14, 85–87, and 109–112 contribute to the NAD(+) site; these read GCNGKM, ATT, and SANM. His141 functions as the Proton donor/acceptor in the catalytic mechanism. (S)-2,3,4,5-tetrahydrodipicolinate is bound at residue His142. Lys145 functions as the Proton donor in the catalytic mechanism. (S)-2,3,4,5-tetrahydrodipicolinate is bound at residue 151 to 152; the sequence is GT.

It belongs to the DapB family.

It is found in the cytoplasm. The catalysed reaction is (S)-2,3,4,5-tetrahydrodipicolinate + NAD(+) + H2O = (2S,4S)-4-hydroxy-2,3,4,5-tetrahydrodipicolinate + NADH + H(+). The enzyme catalyses (S)-2,3,4,5-tetrahydrodipicolinate + NADP(+) + H2O = (2S,4S)-4-hydroxy-2,3,4,5-tetrahydrodipicolinate + NADPH + H(+). The protein operates within amino-acid biosynthesis; L-lysine biosynthesis via DAP pathway; (S)-tetrahydrodipicolinate from L-aspartate: step 4/4. Its function is as follows. Catalyzes the conversion of 4-hydroxy-tetrahydrodipicolinate (HTPA) to tetrahydrodipicolinate. In Caldanaerobacter subterraneus subsp. tengcongensis (strain DSM 15242 / JCM 11007 / NBRC 100824 / MB4) (Thermoanaerobacter tengcongensis), this protein is 4-hydroxy-tetrahydrodipicolinate reductase.